The sequence spans 96 residues: Large ribosomal subunit protein uL23 (96 aa).

The protein belongs to the universal ribosomal protein uL23 family. As to quaternary structure, part of the 50S ribosomal subunit. Contacts protein L29, and trigger factor when it is bound to the ribosome.

One of the early assembly proteins it binds 23S rRNA. One of the proteins that surrounds the polypeptide exit tunnel on the outside of the ribosome. Forms the main docking site for trigger factor binding to the ribosome. This is Large ribosomal subunit protein uL23 from Desulfovibrio desulfuricans (strain ATCC 27774 / DSM 6949 / MB).